The chain runs to 88 residues: Conotoxin VxVIB (88 aa).

The first 22 residues, M1–A22, serve as a signal peptide directing secretion. Residues A23–E52 constitute a propeptide that is removed on maturation. 3 disulfide bridges follow: C53–C68, C60–C72, and C67–C81.

In terms of tissue distribution, expressed by the venom duct.

The protein localises to the secreted. In terms of biological role, may act as a neurotoxin, but produces no obvious effect on ionic currents when tested on the mouse dorsal rooted ganglia (DRG). This Conus vexillum (Flag cone) protein is Conotoxin VxVIB.